The primary structure comprises 134 residues: MRGREVPLVLLALVLCLAPRGWAAPVTAGRGGALAKMYTRGNHWAVGHLMGKKSVAESPQLHEEESLKEQLREYAQWEEATRNLLSLLQAKGARGHQMPPWEPLSIHQPAWDSEDVSNFKDTGPQHEGRNPQLN.

Residues 1–23 (MRGREVPLVLLALVLCLAPRGWA) form the signal peptide. At Met50 the chain carries Methionine amide. Positions 54 to 134 (SVAESPQLHE…QHEGRNPQLN (81 aa)) are excised as a propeptide. Positions 95–134 (GHQMPPWEPLSIHQPAWDSEDVSNFKDTGPQHEGRNPQLN) are disordered. Residues 123-134 (GPQHEGRNPQLN) show a composition bias toward basic and acidic residues.

Belongs to the bombesin/neuromedin-B/ranatensin family. In terms of tissue distribution, detected in adrenal medulla (at protein level).

Its subcellular location is the cytoplasmic vesicle. It is found in the secretory vesicle lumen. The protein localises to the secreted. The protein resides in the cell projection. It localises to the neuron projection. Functionally, stimulates the release of gastrin and other gastrointestinal hormones. Contributes to the perception of prurient stimuli and to the transmission of itch signals in the spinal cord that promote scratching behavior. Contributes primarily to nonhistaminergic itch sensation. In one study, shown to act in the amygdala as part of an inhibitory network which inhibits memory specifically related to learned fear. In another study, shown to act on vasoactive intestinal peptide (VIP)-expressing cells in the auditory cortex, most likely via extrasynaptic diffusion from local and long-range sources, to mediate disinhibition of glutamatergic cells via VIP cell-specific GRPR signaling which leads to enhanced auditory fear memories. Contributes to the regulation of food intake. Inhibits voltage-gated sodium channels but enhances voltage-gated potassium channels in hippocampal neurons. Induces sighing by acting directly on the pre-Botzinger complex, a cluster of several thousand neurons in the ventrolateral medulla responsible for inspiration during respiratory activity. Its function is as follows. Induces an itch response through activation of receptors present on mast cells, triggering mast cell degranulation. The polypeptide is Gastrin-releasing peptide (GRP) (Bos taurus (Bovine)).